The chain runs to 603 residues: Adenine deaminase (603 aa).

Belongs to the metallo-dependent hydrolases superfamily. Adenine deaminase family. Homodimer. The cofactor is Mn(2+).

It catalyses the reaction adenine + H2O + H(+) = hypoxanthine + NH4(+). The protein is Adenine deaminase of Klebsiella pneumoniae subsp. pneumoniae (strain ATCC 700721 / MGH 78578).